We begin with the raw amino-acid sequence, 255 residues long: Tryptophan synthase alpha chain (255 aa).

Catalysis depends on proton acceptor residues Glu49 and Asp60.

It belongs to the TrpA family. Tetramer of two alpha and two beta chains.

It carries out the reaction (1S,2R)-1-C-(indol-3-yl)glycerol 3-phosphate + L-serine = D-glyceraldehyde 3-phosphate + L-tryptophan + H2O. It functions in the pathway amino-acid biosynthesis; L-tryptophan biosynthesis; L-tryptophan from chorismate: step 5/5. In terms of biological role, the alpha subunit is responsible for the aldol cleavage of indoleglycerol phosphate to indole and glyceraldehyde 3-phosphate. This is Tryptophan synthase alpha chain from Desulfovibrio desulfuricans (strain ATCC 27774 / DSM 6949 / MB).